A 187-amino-acid polypeptide reads, in one-letter code: NADH-quinone oxidoreductase subunit B (187 aa).

[4Fe-4S] cluster contacts are provided by Cys-55, Cys-56, Cys-121, and Cys-150.

This sequence belongs to the complex I 20 kDa subunit family. As to quaternary structure, NDH-1 is composed of 14 different subunits. Subunits NuoB, C, D, E, F, and G constitute the peripheral sector of the complex. Requires [4Fe-4S] cluster as cofactor.

The protein resides in the cell inner membrane. The catalysed reaction is a quinone + NADH + 5 H(+)(in) = a quinol + NAD(+) + 4 H(+)(out). Its function is as follows. NDH-1 shuttles electrons from NADH, via FMN and iron-sulfur (Fe-S) centers, to quinones in the respiratory chain. The immediate electron acceptor for the enzyme in this species is believed to be ubiquinone. Couples the redox reaction to proton translocation (for every two electrons transferred, four hydrogen ions are translocated across the cytoplasmic membrane), and thus conserves the redox energy in a proton gradient. The protein is NADH-quinone oxidoreductase subunit B of Bdellovibrio bacteriovorus (strain ATCC 15356 / DSM 50701 / NCIMB 9529 / HD100).